Here is a 502-residue protein sequence, read N- to C-terminus: Lysine--tRNA ligase (502 aa).

Mg(2+)-binding residues include E413 and E420.

Belongs to the class-II aminoacyl-tRNA synthetase family. As to quaternary structure, homodimer. Mg(2+) is required as a cofactor.

The protein localises to the cytoplasm. The catalysed reaction is tRNA(Lys) + L-lysine + ATP = L-lysyl-tRNA(Lys) + AMP + diphosphate. The sequence is that of Lysine--tRNA ligase from Haemophilus influenzae (strain PittGG).